Here is a 187-residue protein sequence, read N- to C-terminus: Pterin-4-alpha-carbinolamine dehydratase 2, mitochondrial (187 aa).

The transit peptide at 1-33 (MSRLLLPKLFSISRTQVPAASLFNNLYRRHKRF) directs the protein to the mitochondrion.

Belongs to the pterin-4-alpha-carbinolamine dehydratase family.

It is found in the mitochondrion. It carries out the reaction (4aS,6R)-4a-hydroxy-L-erythro-5,6,7,8-tetrahydrobiopterin = (6R)-L-erythro-6,7-dihydrobiopterin + H2O. Involved in tetrahydrobiopterin biosynthesis. Possesses pterin-4-alpha-carbinolamine dehydratase activity when expressed in a bacterial heterolgous system. In Arabidopsis thaliana (Mouse-ear cress), this protein is Pterin-4-alpha-carbinolamine dehydratase 2, mitochondrial.